The sequence spans 375 residues: Chaperone protein DnaJ (375 aa).

A J domain is found at 5 to 70 (DYYEVLEISR…QKRQAYDRFG (66 aa)). The segment at 133–211 (GKEVTIQIPS…CHGHGRVRRN (79 aa)) adopts a CR-type zinc-finger fold. Zn(2+) is bound by residues cysteine 146, cysteine 149, cysteine 163, cysteine 166, cysteine 185, cysteine 188, cysteine 199, and cysteine 202. CXXCXGXG motif repeat units follow at residues 146–153 (CEVCRGSG), 163–170 (CATCGGRG), 185–192 (CPQCNGSG), and 199–206 (CTNCHGHG).

This sequence belongs to the DnaJ family. As to quaternary structure, homodimer. It depends on Zn(2+) as a cofactor.

It localises to the cytoplasm. Its function is as follows. Participates actively in the response to hyperosmotic and heat shock by preventing the aggregation of stress-denatured proteins and by disaggregating proteins, also in an autonomous, DnaK-independent fashion. Unfolded proteins bind initially to DnaJ; upon interaction with the DnaJ-bound protein, DnaK hydrolyzes its bound ATP, resulting in the formation of a stable complex. GrpE releases ADP from DnaK; ATP binding to DnaK triggers the release of the substrate protein, thus completing the reaction cycle. Several rounds of ATP-dependent interactions between DnaJ, DnaK and GrpE are required for fully efficient folding. Also involved, together with DnaK and GrpE, in the DNA replication of plasmids through activation of initiation proteins. The sequence is that of Chaperone protein DnaJ from Acidithiobacillus ferrooxidans (strain ATCC 23270 / DSM 14882 / CIP 104768 / NCIMB 8455) (Ferrobacillus ferrooxidans (strain ATCC 23270)).